Reading from the N-terminus, the 882-residue chain is MNAPAKFSTSQIRSDFLAFFEGKGHTIVPSAPLVPGNDPTLLFTNSGMVQFKDVFLGAEKRSYVRAADVQRCLRAGGKHNDLDSVGYTARHHTFFEMLGNWSFGDYFKKDAIAWAWELLTQVWKLPADRLLVTVYHTDEEAFALWRDVIGIPESRIVRIGDNKGAPYASDNFWQMADTGPCGPCTEIFFDHGDHIAGGPPGSPDEDGDRFIEIWNLVFMQFDRQPDGTLVPLPAPCVDTGMGLERLAAILQHVHTNYEIDLFQTLIGKAGSLTGVADLENKSLRVIADHIRACSFLIVDGVLPSNEGRGYVLRRIIRRALRHGWMLGVRQPFFSKMVPTLVELMGEAYPELVVAKDTVARALSAEEERFAETLDAGMKIFDEVASRSQDIIPGADAFRLYDTYGFPVDLTADIARERGMRVDMEGFEFAMERQRETARAAGKFGGGVALPADLVASMSPTVFLGYEAYDADALKVVAILRQGRPVERAEAGDEVIVFTDRTPFYAESGGQVGDSGQLSGPGVSVEVADTQKFAGQFHGHVGRISEGALALGDVLAGEIDTQRRGKTILNHSATHLLHAALREVLGTHVQQKGSLVAPDRLRFDFSHFQPITADELAVIERKVNAEVRTNHGVEVHNMAMQEALDFGAMALFGEKYGENVRVLKMGGYSTELCGGTHVTRTGDIGLFKITSEGGVSSGVRRIEAVTGQGALDYVADEERRLLEAANLLGGNTTEVVDKVRALTERQKRLERELESLKAKLASGATADLGARAIDVAGVKVVAVRLEGFDAKALRDAMDRLKQQLGDSVIVLAGASGGKVALVAGVNGSPTGKVKAGELLGHIASQIGGKGGGRPDLAQGGGEDGPALATALDGVPLWVKQHLG.

Zn(2+) is bound by residues His-570, His-574, Cys-672, and His-676.

The protein belongs to the class-II aminoacyl-tRNA synthetase family. Zn(2+) is required as a cofactor.

The protein localises to the cytoplasm. The catalysed reaction is tRNA(Ala) + L-alanine + ATP = L-alanyl-tRNA(Ala) + AMP + diphosphate. Catalyzes the attachment of alanine to tRNA(Ala) in a two-step reaction: alanine is first activated by ATP to form Ala-AMP and then transferred to the acceptor end of tRNA(Ala). Also edits incorrectly charged Ser-tRNA(Ala) and Gly-tRNA(Ala) via its editing domain. The polypeptide is Alanine--tRNA ligase (Xanthomonas axonopodis pv. citri (strain 306)).